The chain runs to 688 residues: MSGPNRTYSFGEGDDGLAHPSSRTHAMHSQYDDVSPISDGARMNPMNGQGMDHGLASVLEDGRQGWGRSPEPSPSLLTGSSATPGMDNLGPGAVGGGISGIALSVANSHDRLSGVEALMGTDGQEANIPAERGLSTTGSDNPYVPEPPEYRYSYGSNIALGAAAAPAGQLTPGQSVSHLSSTNPSQRNLYDIPYQDVGGLNAGPYQRHSAYSSNDLPVDINPDEIVDDGDDGFVPAPNSGSGARKSQAIPAAAGGAAAGGVLGNLGGLFGGKSAADTSYGPVPGAGLEAGEKGRWVKPKPGGGNKKRGWIVGAILAFIIIGAIVGGAVGGTIGHRGNEEPSSASSASSSSTQTATEDTSVNGDLDKNSAEIKALMNNKNLHKVFPGIDYTPWGVQYPLCLKYPPSQNNVTRDMAVLTQLTNNVRLYGTDCNQTEMVLHAIDKLEIKDMKIWLGVWIDSNETTSRRQIDQLYKIIDDAKDISIFNGAIVGNEALYRAGSDKTSAQTTLINYMQEVKDHFKKKNIDLPVATSDLGDNWDATLVQAADVVMANVHPFFGGIPVDQAAAWTWRFWQDHNVALTKGTNKKQIISEVGWPSGGGNDCGQGANCPNDTAGAVAGVDELNKFMEDWVCQALDNGTDYFWFEAFDEPWKIVYNTGKENWEDKWGLMDSARNLKPGLKIPDCGGKTAT.

Disordered regions lie at residues methionine 1–glutamine 49, aspartate 61–proline 91, and glutamine 169–tyrosine 194. The Cytoplasmic segment spans residues methionine 1–arginine 307. Residues serine 175 to asparagine 188 show a composition bias toward polar residues. A helical; Signal-anchor for type II membrane protein transmembrane segment spans residues glycine 308–valine 328. The Extracellular segment spans residues glycine 329 to threonine 688. Residues histidine 334–aspartate 363 are disordered. Positions serine 341 to threonine 355 are enriched in low complexity. Residues asparagine 408, asparagine 431, and asparagine 459 are each glycosylated (N-linked (GlcNAc...) asparagine). The active-site Proton donor is glutamate 491. Glutamate 590 (nucleophile) is an active-site residue. N-linked (GlcNAc...) asparagine glycans are attached at residues asparagine 609 and asparagine 635.

It belongs to the glycosyl hydrolase 17 family.

The protein localises to the cell membrane. It carries out the reaction Hydrolysis of (1-&gt;3)-beta-D-glucosidic linkages in (1-&gt;3)-beta-D-glucans.. In terms of biological role, glucanases play a role in cell expansion during growth, in cell-cell fusion during mating, and in spore release during sporulation. This enzyme may be involved in beta-glucan degradation. Active on laminarin and lichenan. In Aspergillus fumigatus (strain CBS 144.89 / FGSC A1163 / CEA10) (Neosartorya fumigata), this protein is Probable glucan endo-1,3-beta-glucosidase btgC (btgC).